A 730-amino-acid chain; its full sequence is MKTKTYNFRYIVASVLTLLMNGSSAATPPNSNSSSSCNRTFGGISIPFPFGIGGKDCYLNSWYEVVCNSTTSGSCKTVPFLTRINREVVNISLPKSDFFSPYGVVHIKGPVTSLGCSSNISQGLQKTLPDLNITGRGSPYFLTDENRLVAVGCGTKALMTDIESEILGCESSCKDTKSNEVGNSLCNGYKCCQARLPVERPQAVGVNIESNNDTRGEGCKAAFLTSMKYFPSNITKPEWFQADGYAVVELGWYFDTSDSRFRNPLGCTNLTRSSGSYFLTDICLCRYGYFSRMSYRSCYCGSGYRGNPYIRGGCIDIDECEVPNKCGEDTCVNMAGRYSCVPKITKPAKLAHVLRGVLIGLLGLLFFVIGIFGLYKFIRKRRRIIRSMKFFKRNGGLLLKQQLTTKDGSVEMSKIFSSRELEKATDNFSIDRVLGQGGQGTVYKRMLVDGSIVAVKRSKVVDEDKMEEFINEIVLLSQINHRNIVKLLGCCLETEVPILVYEYIPNGDLFKRLHDEYDDYMMTWEVRLRIAVEIAGALSYMHSAASFPIFHRDIKTTNILLDEKYRAKISDFGTSRSVATDQTHLTTLVAGTFGYMDPEYFLSSQYTHKSDVYSFGVVLVELITGEKPMSRVRSEEGIGLATYFLEAMKENRAVDIIDIRIKDESKQVMAVAKLARRCLNRKGNKRPNMREVSIKLERIRSSPKDLDVHTENEEEEEEDQLMEINRIYDS.

Residues 1–25 (MKTKTYNFRYIVASVLTLLMNGSSA) form the signal peptide. Residues 26-357 (ATPPNSNSSS…AKLAHVLRGV (332 aa)) lie on the Extracellular side of the membrane. N-linked (GlcNAc...) asparagine glycans are attached at residues Asn-32, Asn-38, Asn-68, Asn-90, Asn-119, Asn-132, Asn-212, Asn-233, and Asn-269. The interval 283–340 (CLCRYGYFSRMSYRSCYCGSGYRGNPYIRGGCIDIDECEVPNKCGEDTCVNMAGRYSC) is atypical EGF-like. Cystine bridges form between Cys-285-Cys-298, Cys-320-Cys-331, and Cys-326-Cys-340. A helical membrane pass occupies residues 358-378 (LIGLLGLLFFVIGIFGLYKFI). Residues 379-730 (RKRRRIIRSM…LMEINRIYDS (352 aa)) are Cytoplasmic-facing. The Protein kinase domain maps to 428–699 (FSIDRVLGQG…REVSIKLERI (272 aa)). ATP contacts are provided by residues 434 to 442 (LGQGGQGTV) and Lys-456. The Proton acceptor role is filled by Asp-553. A disordered region spans residues 703-730 (PKDLDVHTENEEEEEEDQLMEINRIYDS). The segment covering 712 to 721 (NEEEEEEDQL) has biased composition (acidic residues).

This sequence belongs to the protein kinase superfamily. Ser/Thr protein kinase family. As to expression, preferentially expressed in roots and flowers.

The protein localises to the membrane. It catalyses the reaction L-seryl-[protein] + ATP = O-phospho-L-seryl-[protein] + ADP + H(+). The enzyme catalyses L-threonyl-[protein] + ATP = O-phospho-L-threonyl-[protein] + ADP + H(+). Functionally, serine/threonine-protein kinase that may function as a signaling receptor of extracellular matrix component. The chain is Wall-associated receptor kinase-like 3 (WAKL3) from Arabidopsis thaliana (Mouse-ear cress).